Reading from the N-terminus, the 197-residue chain is Peptidyl-tRNA hydrolase (197 aa).

Y23 contacts tRNA. H28 serves as the catalytic Proton acceptor. F73, N75, and N121 together coordinate tRNA.

It belongs to the PTH family. In terms of assembly, monomer.

It is found in the cytoplasm. The enzyme catalyses an N-acyl-L-alpha-aminoacyl-tRNA + H2O = an N-acyl-L-amino acid + a tRNA + H(+). Its function is as follows. Hydrolyzes ribosome-free peptidyl-tRNAs (with 1 or more amino acids incorporated), which drop off the ribosome during protein synthesis, or as a result of ribosome stalling. Catalyzes the release of premature peptidyl moieties from peptidyl-tRNA molecules trapped in stalled 50S ribosomal subunits, and thus maintains levels of free tRNAs and 50S ribosomes. In Frankia alni (strain DSM 45986 / CECT 9034 / ACN14a), this protein is Peptidyl-tRNA hydrolase.